Consider the following 886-residue polypeptide: Peptidyl-lysine N-acetyltransferase PatZ (886 aa).

Residues 487-523 enclose the ATP-grasp domain; the sequence is QPILQAYGMNTLPTWIASDSTEAVHIAEQIGYPVALK. The 156-residue stretch at 726–881 folds into the N-acetyltransferase domain; sequence CLFRPILPED…GIVGLTLNLA (156 aa).

It in the N-terminal section; belongs to the acetate CoA ligase alpha subunit family. This sequence in the central section; belongs to the acetate CoA ligase beta subunit family. As to quaternary structure, stable tetramer in solution. Oligomerizes to an octameric form by autoacetylation. Autoacetylated. Deacetylated by CobB.

The enzyme catalyses L-lysyl-[protein] + acetyl-CoA = N(6)-acetyl-L-lysyl-[protein] + CoA + H(+). Functionally, catalyzes the acetyl-CoA-dependent acetylation of lysine residues of a large number of target proteins. Acetylates RNase R in exponential phase cells and RNase II. Required for the glucose-dependent acetylation on multiple lysines of alpha, beta and beta' RNAP subunits. Also acetylates acetyl-coenzyme A synthetase (Acs) and the chromosomal replication initiator protein DnaA, and inhibits their activity. Overexpression leads to the acetylation of a large number of additional proteins and inhibits motility. In Escherichia coli (strain K12), this protein is Peptidyl-lysine N-acetyltransferase PatZ.